A 55-amino-acid chain; its full sequence is DNA-directed RNA polymerase subunit Rpo10 (55 aa).

Zn(2+)-binding residues include C6, C9, C43, and C44.

The protein belongs to the archaeal Rpo10/eukaryotic RPB10 RNA polymerase subunit family. In terms of assembly, part of the RNA polymerase complex. Requires Zn(2+) as cofactor.

The protein resides in the cytoplasm. The catalysed reaction is RNA(n) + a ribonucleoside 5'-triphosphate = RNA(n+1) + diphosphate. DNA-dependent RNA polymerase (RNAP) catalyzes the transcription of DNA into RNA using the four ribonucleoside triphosphates as substrates. In Methanothermobacter thermautotrophicus (strain ATCC 29096 / DSM 1053 / JCM 10044 / NBRC 100330 / Delta H) (Methanobacterium thermoautotrophicum), this protein is DNA-directed RNA polymerase subunit Rpo10.